The sequence spans 977 residues: ELMO domain-containing protein A (977 aa).

One can recognise an ELMO domain in the interval 383-561 (EHDALLMKLW…SVKNLIITAL (179 aa)). Composition is skewed to low complexity over residues 792–838 (SSNN…NNSG) and 852–897 (QQQQ…SSSS). The disordered stretch occupies residues 792-899 (SSNNNIKDNL…SSSSSSSSNP (108 aa)).

In terms of assembly, associates with mhcA.

Functionally, functions as a negative regulator of actin polymerization. Modulates actin/myosin II at cortex actinomyosins to prevent excessive F-actin polymerization around the cell periphery, thereby maintaining proper cell shape during phagocytosis and chemotaxis. This chain is ELMO domain-containing protein A (elmoA), found in Dictyostelium discoideum (Social amoeba).